The following is a 413-amino-acid chain: Tyrosine--tRNA ligase (413 aa).

Positions 59–68 (PTAPDIHLGH) match the 'HIGH' region motif. The short motif at 243–247 (KMSKS) is the 'KMSKS' region element. Lysine 246 is an ATP binding site. The S4 RNA-binding domain maps to 351 to 411 (LAIGQLLKQA…GKRRFARVTL (61 aa)).

It belongs to the class-I aminoacyl-tRNA synthetase family. TyrS type 2 subfamily. In terms of assembly, homodimer.

It localises to the cytoplasm. The catalysed reaction is tRNA(Tyr) + L-tyrosine + ATP = L-tyrosyl-tRNA(Tyr) + AMP + diphosphate + H(+). Catalyzes the attachment of tyrosine to tRNA(Tyr) in a two-step reaction: tyrosine is first activated by ATP to form Tyr-AMP and then transferred to the acceptor end of tRNA(Tyr). The chain is Tyrosine--tRNA ligase from Burkholderia thailandensis (strain ATCC 700388 / DSM 13276 / CCUG 48851 / CIP 106301 / E264).